The primary structure comprises 183 residues: Ribosome maturation factor RimP (183 aa).

It belongs to the RimP family.

It is found in the cytoplasm. In terms of biological role, required for maturation of 30S ribosomal subunits. This is Ribosome maturation factor RimP from Mycobacterium bovis (strain ATCC BAA-935 / AF2122/97).